Here is a 315-residue protein sequence, read N- to C-terminus: Prephenate dehydratase (315 aa).

Residues 3 to 189 (RIAYLGPEGT…ARTRFVLVGP (187 aa)) enclose the Prephenate dehydratase domain. Residues 203 to 280 (SVVLRIDNAP…ADVRYLGSWP (78 aa)) enclose the ACT domain.

As to quaternary structure, homodimer.

It catalyses the reaction prephenate + H(+) = 3-phenylpyruvate + CO2 + H2O. Its pathway is amino-acid biosynthesis; L-phenylalanine biosynthesis; phenylpyruvate from prephenate: step 1/1. In Mycobacterium avium (strain 104), this protein is Prephenate dehydratase (pheA).